A 456-amino-acid chain; its full sequence is MLITKSSSECHVAVLAFPFSTHPGPLLNLVQRLAVEAPDVIFSFISTAKSNESLFSVPNPENIKPYPVWDGVPEGYVFARKPQEDINLFLKVAAKGFKLAMQAVEVETRRRIGWVMADAFLWFSSDMAEERGISWVPIWMSGGACSLSVHLYTDLIRETVGFSGISGRQNELLKFIPGFSELRLGDLPSGVLLGNLKSPFSIMLHKIGQALPKATTVLINSFEELDPELNKVLNSNFGKFLNIGPSNLTSPHPLSNSDEYGCIPWLAKQRSASVAYIGFGSVAKPKPDEVVAIAEALEASSTPFLWSLRDTSKQYLPEGFLKRTSELGKIVPWAPQVQVLAHSSIGVFITHCGWNSVLETIAGGVPMIGRPFFGDHPINTWMVENVWKIGVRVEGGVFTKSSTMRALELVLSHEKGKKLKDQIGHLRELALKAVGPKGSSSQNFNNLLEVITGHNL.

S20, H22, and Q83 together coordinate an anthocyanidin. H22 functions as the Proton acceptor in the catalytic mechanism. The active-site Charge relay is D118. Residue H150 participates in an anthocyanidin binding. S281, W333, A334, H351, N355, S356, and E359 together coordinate UDP. An an anthocyanidin-binding site is contributed by G374.

It belongs to the UDP-glycosyltransferase family. Expressed at low levels in stems and leaves. Expressed in ovaries.

The enzyme catalyses cyanidin + UDP-alpha-D-galactose = cyanidin 3-O-beta-D-galactoside + UDP + H(+). It participates in pigment biosynthesis; anthocyanin biosynthesis. Its function is as follows. Involved in anthocyanin biosynthesis by catalyzing the galactosylation of cyanidin. Required for the accumulation of anthocyanin in red-fleshed kiwifruit varieties. Seems to be the key enzyme regulating the accumulation of anthocyanin in red-fleshed kiwi fruits. The sequence is that of Anthocyanidin 3-O-galactosyltransferase F3GT1 from Actinidia chinensis var. chinensis (Chinese soft-hair kiwi).